Here is a 576-residue protein sequence, read N- to C-terminus: Arginine--tRNA ligase (576 aa).

Residues 122-132 carry the 'HIGH' region motif; that stretch reads PNVAKEMHVGH.

This sequence belongs to the class-I aminoacyl-tRNA synthetase family. Monomer.

It localises to the cytoplasm. It carries out the reaction tRNA(Arg) + L-arginine + ATP = L-arginyl-tRNA(Arg) + AMP + diphosphate. In Photobacterium profundum (strain SS9), this protein is Arginine--tRNA ligase.